We begin with the raw amino-acid sequence, 307 residues long: uncharacterized protein (307 aa).

2 stretches are compositionally biased toward basic and acidic residues: residues 42–52 and 112–121; these read TCRSPGEDKCP and QKKEEPEGSH. Residues 42-153 are disordered; it reads TCRSPGEDKC…VPPAVASASA (112 aa). Residues 129 to 139 show a composition bias toward basic residues; it reads KQHKKAKKRKS.

This is an uncharacterized protein from Mus musculus (Mouse).